A 760-amino-acid polypeptide reads, in one-letter code: Metal transporter cnnm-2 (760 aa).

An N-terminal signal peptide occupies residues 1-21 (MIIKVFLRLLLLCAHIVCIDG). The Extracellular portion of the chain corresponds to 22–153 (KLEIRPVVSG…ETFMPVWAQC (132 aa)). Residue Asn-88 is glycosylated (N-linked (GlcNAc...) asparagine). Positions 145–323 (TFMPVWAQCA…MENDACDIDL (179 aa)) constitute a CNNM transmembrane domain. The helical transmembrane segment at 154–174 (AILCLLFSISALCSGLTLGLM) threads the bilayer. Topologically, residues 175–208 (ALTPQELSILMKSGSQREKKHAAAIYPIRCHGNR) are cytoplasmic. Residues 209–229 (LLCTVIIMNVIVNTGITLLFD) traverse the membrane as a helical segment. Position 230 (Asp-230) is a topological domain, extracellular. A helical transmembrane segment spans residues 231 to 251 (LAEGLIAFVASTVGIVVFGEI). Topologically, residues 252 to 261 (LPQSICVKYG) are cytoplasmic. The helical transmembrane segment at 262-282 (LAVGANTIFITKFFMFLLFPI) threads the bilayer. Residues 283 to 760 (TWPLGKILDK…SVEELKPLME (478 aa)) are Extracellular-facing. Residues Asn-302 and Asn-403 are each glycosylated (N-linked (GlcNAc...) asparagine). 2 CBS domains span residues 344-406 (MTDI…NITV) and 442-512 (MVAK…ITDE). Residues Asn-528, Asn-592, and Asn-667 are each glycosylated (N-linked (GlcNAc...) asparagine). Positions 708-734 (DDFGSPTRKASILDSSPNSRKRSSTSV) are disordered.

This sequence belongs to the ACDP family.

It localises to the cell membrane. In terms of biological role, probable metal transporter. Probably acts redundantly with the other metal transport proteins cnnm-1, cnnm-3, cnnm-4 and cnnm-5 to regulate Mg(2+) homeostasis. The sequence is that of Metal transporter cnnm-2 from Caenorhabditis elegans.